A 153-amino-acid polypeptide reads, in one-letter code: Zinc finger protein GIS2 (153 aa).

7 consecutive CCHC-type zinc fingers follow at residues 4–21, 23–40, 47–64, 65–82, 92–109, 116–133, and 135–152; these read KACY…DCDS, RLCY…DCTM, KQCY…ECTV, QRCF…ECPE, VSCY…DCMK, LKCY…DCQN, and RLCY…DCPK.

It localises to the cytoplasm. Its function is as follows. May act in the sexual differentiation pathway. The sequence is that of Zinc finger protein GIS2 (GIS2) from Saccharomyces cerevisiae (strain ATCC 204508 / S288c) (Baker's yeast).